The following is a 406-amino-acid chain: Dual-specificity RNA methyltransferase RlmN (406 aa).

The active-site Proton acceptor is the Glu121. The Radical SAM core domain maps to Glu127–Leu377. Cys134 and Cys380 are disulfide-bonded. Cys141, Cys145, and Cys148 together coordinate [4Fe-4S] cluster. Residues Gly206–Glu207, Ser238, Ser260–His262, and Asn337 each bind S-adenosyl-L-methionine. Catalysis depends on Cys380, which acts as the S-methylcysteine intermediate.

The protein belongs to the radical SAM superfamily. RlmN family. The cofactor is [4Fe-4S] cluster.

It is found in the cytoplasm. It catalyses the reaction adenosine(2503) in 23S rRNA + 2 reduced [2Fe-2S]-[ferredoxin] + 2 S-adenosyl-L-methionine = 2-methyladenosine(2503) in 23S rRNA + 5'-deoxyadenosine + L-methionine + 2 oxidized [2Fe-2S]-[ferredoxin] + S-adenosyl-L-homocysteine. The enzyme catalyses adenosine(37) in tRNA + 2 reduced [2Fe-2S]-[ferredoxin] + 2 S-adenosyl-L-methionine = 2-methyladenosine(37) in tRNA + 5'-deoxyadenosine + L-methionine + 2 oxidized [2Fe-2S]-[ferredoxin] + S-adenosyl-L-homocysteine. Its function is as follows. Specifically methylates position 2 of adenine 2503 in 23S rRNA and position 2 of adenine 37 in tRNAs. m2A2503 modification seems to play a crucial role in the proofreading step occurring at the peptidyl transferase center and thus would serve to optimize ribosomal fidelity. The chain is Dual-specificity RNA methyltransferase RlmN from Azorhizobium caulinodans (strain ATCC 43989 / DSM 5975 / JCM 20966 / LMG 6465 / NBRC 14845 / NCIMB 13405 / ORS 571).